Consider the following 304-residue polypeptide: Recombination-associated protein RdgC (304 aa).

This sequence belongs to the RdgC family.

The protein resides in the cytoplasm. It is found in the nucleoid. Its function is as follows. May be involved in recombination. In Paraburkholderia phymatum (strain DSM 17167 / CIP 108236 / LMG 21445 / STM815) (Burkholderia phymatum), this protein is Recombination-associated protein RdgC.